The chain runs to 1734 residues: MGQTVTTPLSLTLEHWGDVQRIASNQSVEVKKRRRVTFCPAEWPTFDVGWPQDGTFNLDIILQVKSKVFSPGPHGHPDQVPYIVTWEAIAYEPPSWVKPFVSPKLSLSPTAPILPSGPSTQPPPRSALYPALTPSIKPRPSKPQVLSDNGGPLIDLLTEDPPPYGEQGPSSPDGDGDREEATYTSEIPAPSPMVSRLRGKRDPPAADSTTSRAFPLRLGGNGQLQYWPFSSSDLYNWKNNNPSFSEDPGKLTALIESVLTTHQPTWDDCQQLLGTLLTGEEKQRVLLEARKAVRGNDGRPTQLPNEVNSAFPLERPDWDYTTPEGRNHLVLYRQLLLAGLQNAGRSPTNLAKVKGITQGPNESPSAFLERLKEAYRRYTPYDPEDHGQETSVSMSFIWQSAPDIGRKLERLEDLKSKTLRDLVREAEKIFNKRETPEEREERFRRETEENEERRRAEDEQREKERDRRRQREMSKLLATVVTGQRQDRQGGERKRPQLDKDQCAYCKEKGHWAKDCPKKPRGPRGPRPQTSLLTLDDQGGQGQEPPPEPRITLKVGGQPVTFLVDTGAQHSVLTQNPGPLSDRSAWVQGATGGKRYRWTTDRKVHLATGKVTHSFLHVPDCPYPLLGRDLLTKLKAQIHFKGSGAQIVGPMGQPLQVLTLNIEDEYRLHEISTEPDVSPGSTWLSDFPQAWAETGGMGLAVRQAPLIIPLKATSTPVSIKQYPMSQEAKLGIKPHIQRLLDQGILVPCQSPWNTPLLPVKKPGTNDYRPVQGLREVNKRVEDIHPTVPNPYNLLSGLPTSHRWYTVLDLKDAFFCLRLHPTSQPLFASEWRDPGMGISGQLTWTRLPQGFKNSPTLFDEALHRGLADFRIQHPDLILLQYVDDLLLAATSELDCQQGTRALLKTLGNLGYRASAKKAQICQKQVKYLGYLLREGQRWLTEARKETVMGQPTPKTPRQLREFLGTAGFCRLWIPRFAEMAAPLYPLTKTGTLFNWGPDQQKAYHEIKQALLTAPALGLPDLTKPFELFVDEKQGYAKGVLTQKLGPWRRPVAYLSKKLDPVAAGWPPCLRMVAAIAVLTKDAGKLTMGQPLVILAPHAVEALVKQPPDRWLSNARMTHYQAMLLDTDRVQFGPVVALNPATLLPLPEEGAPHDCLEILAETHGTEPDLTDQPIPDADHTWYTDGSSFLQEGQRKAGAAVTTETEVIWARALPAGTSAQRAELIALTQALKMAEGKRLNVYTDSRYAFATAHIHGEIYKRRGLLTSEGREIKNKSEILALLKALFLPKRLSIIHCLGHQKGDSAEARGNRLADQAAREAAIKTPPDTSTLLIEDSTPYTPAYFHYTETDLKKLRELGATYNQSKGYWVFQGKPVMPDQFVFELLDSLHRLTHLGYQKMKALLDRGESPYYMLNRDKTLQYVADSCTVCAQVNASKAKIGAGVRVRGHRPGTHWEIDFTEVKPGLYGYKYLLVFVDTFSGWVEAFPTKHETAKIVTKKLLEEIFPRFGMPQVLGTDNGPAFVSQVSQSVAKLLGIDWKLHCAYRPQSSGQVERMNRTIKETLTKLTLATGTRDWVLLLPLALYRARNTPGPHGLTPYEILYGAPPPLVNFHDPEMSKFTNSPSLQAHLQALQAVQREVWKPLAAAYQDQLDQPVIPHPFRVGDTVWVRRHQTKNLEPRWKGPYTVLLTTPTALKVDGISAWIHAAHVKAATTPPIRPSWRVQRSQNPLKIRLTRGAP.

Residue G2 is the site of N-myristoyl glycine; by host attachment. The PTAP/PSAP motif signature appears at P109–P112. Positions P112–R217 are disordered. An LYPX(n)L motif motif is present at residues L128–L132. The PPXY motif motif lies at P161–Y164. Residue S191 is modified to Phosphoserine; by host. Residues G344–V392 form an interaction with host PIAS4 region. The interaction with host UBE2I stretch occupies residues I429–E434. Composition is skewed to basic and acidic residues over residues R433–S474 and R485–L498. Disordered stretches follow at residues R433–L498 and W512–I551. Residues E437–L477 adopt a coiled-coil conformation. A CCHC-type zinc finger spans residues D501–K518. A Peptidase A2 domain is found at V560 to L630. Residue D565 is the Protease; shared with dimeric partner of the active site. The 192-residue stretch at L740 to L931 folds into the Reverse transcriptase domain. Residues D808, D882, D883, D1182, E1220, D1241, and D1311 each coordinate Mg(2+). Residues P1173–I1319 form the RNase H type-1 domain. An HHCC-type zinc finger spans residues H1386 to C1426. One can recognise an Integrase catalytic domain in the interval R1443 to P1601. Mg(2+) contacts are provided by D1454 and D1513.

The protein belongs to the retroviral Pol polyprotein family. In terms of assembly, homohexamer; further associates as homomultimer. The virus core is composed of a lattice formed from hexagonal rings, each containing six capsid monomers. Interacts with mouse UBE2I and mouse PIAS4. As to quaternary structure, interacts (via PPXY motif) with host NEDD4. Interacts (via PSAP motif) with host TSG101. Interacts (via LYPX(n)L motif) with host PDCD6IP. The reverse transcriptase is a monomer (Potential). Interacts (via RNase domains) with host release factor ETF1; this interaction is essential for translational readthrough of amber codon between viral gag and pol genes, as well as for viral replication. In terms of assembly, homodimer. Mg(2+) serves as cofactor. Ubiquitinated by ITCH. Gag can recruit the ubiquitin ligase Itch in an L domain-independent manner to facilitate virus release via a mechanism that involves Gag ubiquitination. Post-translationally, specific enzymatic cleavages by the viral protease yield mature proteins. The protease is released by autocatalytic cleavage. The polyprotein is cleaved during and after budding, this process is termed maturation. In terms of processing, sumoylated; which is required for virus replication. Phosphorylated on serine residues.

It is found in the virion. The protein localises to the host cell membrane. Its subcellular location is the host late endosome membrane. It localises to the host endosome. The protein resides in the host multivesicular body. It is found in the host cytoplasm. It catalyses the reaction DNA(n) + a 2'-deoxyribonucleoside 5'-triphosphate = DNA(n+1) + diphosphate. It carries out the reaction Endonucleolytic cleavage to 5'-phosphomonoester.. Its activity is regulated as follows. Most efficiently inhibited by Amprenavir, which is able to block Gag-Pol processing in infected cells. Its function is as follows. Plays a role in budding and is processed by the viral protease during virion maturation outside the cell. During budding, it recruits, in a PPXY-dependent or independent manner, Nedd4-like ubiquitin ligases that conjugate ubiquitin molecules to Gag-Pol, or to Gag-Pol binding host factors. Interaction with HECT ubiquitin ligases probably links the viral protein to the host ESCRT pathway and facilitates release. In terms of biological role, targets Gag and gag-pol polyproteins to the plasma membrane via a multipartite membrane binding signal, that includes its myristoylated N-terminus. Also mediates nuclear localization of the pre-integration complex. Functionally, constituent of the pre-integration complex (PIC) which tethers the latter to mitotic chromosomes. This allows the integration of the viral genome into the host DNA. Forms the spherical core of the virion that encapsulates the genomic RNA-nucleocapsid complex. Its function is as follows. Involved in the packaging and encapsidation of two copies of the genome. Binds with high affinity to conserved UCUG elements within the packaging signal, located near the 5'-end of the genome. This binding is dependent on genome dimerization. Acts as a nucleic acid chaperone which is involved in rearrangement of nucleic acid secondary structures during gRNA retrotranscription. In terms of biological role, the aspartyl protease mediates proteolytic cleavages of Gag and Gag-Pol polyproteins during or shortly after the release of the virion from the plasma membrane. Cleavages take place as an ordered, step-wise cascade to yield mature proteins. This process is called maturation. Displays maximal activity during the budding process just prior to particle release from the cell (Potential). Cleaves the translation initiation factor eIF4G leading to the inhibition of host cap-dependent translation. Functionally, RT is a multifunctional enzyme that converts the viral dimeric RNA genome into dsDNA in the cytoplasm, shortly after virus entry into the cell. This enzyme displays a DNA polymerase activity that can copy either DNA or RNA templates, and a ribonuclease H (RNase H) activity that cleaves the RNA strand of RNA-DNA heteroduplexes in a partially processive 3' to 5' endonucleasic mode. Conversion of viral genomic RNA into dsDNA requires many steps. A tRNA binds to the primer-binding site (PBS) situated at the 5' end of the viral RNA. RT uses the 3' end of the tRNA primer to perform a short round of RNA-dependent minus-strand DNA synthesis. The reading proceeds through the U5 region and ends after the repeated (R) region which is present at both ends of viral RNA. The portion of the RNA-DNA heteroduplex is digested by the RNase H, resulting in a ssDNA product attached to the tRNA primer. This ssDNA/tRNA hybridizes with the identical R region situated at the 3' end of viral RNA. This template exchange, known as minus-strand DNA strong stop transfer, can be either intra- or intermolecular. RT uses the 3' end of this newly synthesized short ssDNA to perform the RNA-dependent minus-strand DNA synthesis of the whole template. RNase H digests the RNA template except for a polypurine tract (PPT) situated at the 5' end of the genome. It is not clear if both polymerase and RNase H activities are simultaneous. RNase H probably can proceed both in a polymerase-dependent (RNA cut into small fragments by the same RT performing DNA synthesis) and a polymerase-independent mode (cleavage of remaining RNA fragments by free RTs). Secondly, RT performs DNA-directed plus-strand DNA synthesis using the PPT that has not been removed by RNase H as primers. PPT and tRNA primers are then removed by RNase H. The 3' and 5' ssDNA PBS regions hybridize to form a circular dsDNA intermediate. Strand displacement synthesis by RT to the PBS and PPT ends produces a blunt ended, linear dsDNA copy of the viral genome that includes long terminal repeats (LTRs) at both ends. Catalyzes viral DNA integration into the host chromosome, by performing a series of DNA cutting and joining reactions. This enzyme activity takes place after virion entry into a cell and reverse transcription of the RNA genome in dsDNA. The first step in the integration process is 3' processing. This step requires a complex comprising the viral genome, matrix protein and integrase. This complex is called the pre-integration complex (PIC). The integrase protein removes 2 nucleotides from each 3' end of the viral DNA, leaving recessed CA OH's at the 3' ends. In the second step that requires cell division, the PIC enters cell nucleus. In the third step, termed strand transfer, the integrase protein joins the previously processed 3' ends to the 5' ends of strands of target cellular DNA at the site of integration. The last step is viral DNA integration into host chromosome. This is Gag-Pol polyprotein (pol) from Mus musculus (Mouse).